A 212-amino-acid polypeptide reads, in one-letter code: Protein-L-isoaspartate O-methyltransferase (212 aa).

The active site involves Ser-60.

It belongs to the methyltransferase superfamily. L-isoaspartyl/D-aspartyl protein methyltransferase family.

It is found in the cytoplasm. It catalyses the reaction [protein]-L-isoaspartate + S-adenosyl-L-methionine = [protein]-L-isoaspartate alpha-methyl ester + S-adenosyl-L-homocysteine. Its function is as follows. Catalyzes the methyl esterification of L-isoaspartyl residues in peptides and proteins that result from spontaneous decomposition of normal L-aspartyl and L-asparaginyl residues. It plays a role in the repair and/or degradation of damaged proteins. The protein is Protein-L-isoaspartate O-methyltransferase of Methanococcus maripaludis (strain C7 / ATCC BAA-1331).